The chain runs to 232 residues: Golgi SNAP receptor complex member 1 (232 aa).

Residues 1–211 (MGGSSYDVLR…QRINIKKRRD (211 aa)) are Cytoplasmic-facing. 2 coiled-coil regions span residues 6-23 (YDVL…IDLK) and 52-80 (GEHV…MSDL). The chain crosses the membrane as a helical; Anchor for type IV membrane protein span at residues 212-232 (SLILGAVIGFCVILLLLYAFN).

It belongs to the GOSR1 family. Component of several multiprotein Golgi SNARE complexes.

It is found in the golgi apparatus membrane. Its function is as follows. Involved in transport from the ER to the Golgi apparatus as well as in intra-Golgi transport. It belongs to a super-family of proteins called t-SNAREs or soluble NSF (N-ethylmaleimide-sensitive factor) attachment protein receptor. The protein is Golgi SNAP receptor complex member 1 (Gos28) of Drosophila melanogaster (Fruit fly).